The following is a 106-amino-acid chain: Protein S40-3 (106 aa).

The segment at 1 to 65 (MSEEFQESEV…TEEEGEMTPP (65 aa)) is disordered. Positions 16–41 (SFTRKDNKISHNNENYERKSTEKDKI) are enriched in basic and acidic residues.

It belongs to the senescence regulator S40 family.

It localises to the nucleus. Regulates senescence either by modulating WRKY53 or by activating SAG12. Affects the natural variation of cyst nematodes sex ratio and susceptibility to parasitic nematodes, depending on single nucleotide polymorphism (SNPs) between cultivars. This is Protein S40-3 from Arabidopsis thaliana (Mouse-ear cress).